A 229-amino-acid polypeptide reads, in one-letter code: Ribose-5-phosphate isomerase A (229 aa).

Substrate-binding positions include 28 to 31 (TGST), 85 to 88 (DGAD), and 98 to 101 (KGRG). The active-site Proton acceptor is Glu107. Residue Lys125 participates in substrate binding.

Belongs to the ribose 5-phosphate isomerase family. As to quaternary structure, homodimer.

It catalyses the reaction aldehydo-D-ribose 5-phosphate = D-ribulose 5-phosphate. The protein operates within carbohydrate degradation; pentose phosphate pathway; D-ribose 5-phosphate from D-ribulose 5-phosphate (non-oxidative stage): step 1/1. Catalyzes the reversible conversion of ribose-5-phosphate to ribulose 5-phosphate. The sequence is that of Ribose-5-phosphate isomerase A from Pyrococcus furiosus (strain ATCC 43587 / DSM 3638 / JCM 8422 / Vc1).